The chain runs to 526 residues: Threonine synthase 1, chloroplastic (526 aa).

The transit peptide at methionine 1–threonine 40 directs the protein to the chloroplast. Residues proline 142–glycine 144, serine 165–phenylalanine 167, asparagine 172, leucine 173, lysine 181, and asparagine 187 each bind S-adenosyl-L-methionine. The residue at position 203 (lysine 203) is an N6-(pyridoxal phosphate)lysine. Pyridoxal 5'-phosphate contacts are provided by residues glycine 335–asparagine 339 and threonine 472.

This sequence belongs to the threonine synthase family. In terms of assembly, homodimer. Pyridoxal 5'-phosphate serves as cofactor.

Its subcellular location is the plastid. It localises to the chloroplast. The enzyme catalyses O-phospho-L-homoserine + H2O = L-threonine + phosphate. Its pathway is amino-acid biosynthesis; L-threonine biosynthesis; L-threonine from L-aspartate: step 5/5. Allosterically activated by S-adenosyl-L-methionine (SAM). Activated by S-adenosyl-L-ethionine, 5'-amino-5'-deoxyadenosine, sinefungin and 5'-deoxy-5-methylthioadenosine. Inhibited by AMP. Its function is as follows. Catalyzes the gamma-elimination of phosphate from L-phosphohomoserine and the beta-addition of water to produce L-threonine. In Arabidopsis thaliana (Mouse-ear cress), this protein is Threonine synthase 1, chloroplastic (TS1).